A 475-amino-acid chain; its full sequence is Ribulose bisphosphate carboxylase large chain (475 aa).

A propeptide spanning residues 1 to 2 (MS) is cleaved from the precursor. P3 is subject to N-acetylproline. At K14 the chain carries N6,N6,N6-trimethyllysine. Positions 123 and 173 each coordinate substrate. The active-site Proton acceptor is the K175. K177 provides a ligand contact to substrate. Residues K201, D203, and E204 each contribute to the Mg(2+) site. N6-carboxylysine is present on K201. H294 acts as the Proton acceptor in catalysis. R295, H327, and S379 together coordinate substrate.

Belongs to the RuBisCO large chain family. Type I subfamily. As to quaternary structure, heterohexadecamer of 8 large chains and 8 small chains; disulfide-linked. The disulfide link is formed within the large subunit homodimers. Mg(2+) serves as cofactor. Post-translationally, the disulfide bond which can form in the large chain dimeric partners within the hexadecamer appears to be associated with oxidative stress and protein turnover.

It localises to the plastid. The protein resides in the chloroplast. The catalysed reaction is 2 (2R)-3-phosphoglycerate + 2 H(+) = D-ribulose 1,5-bisphosphate + CO2 + H2O. It carries out the reaction D-ribulose 1,5-bisphosphate + O2 = 2-phosphoglycolate + (2R)-3-phosphoglycerate + 2 H(+). Its function is as follows. RuBisCO catalyzes two reactions: the carboxylation of D-ribulose 1,5-bisphosphate, the primary event in carbon dioxide fixation, as well as the oxidative fragmentation of the pentose substrate in the photorespiration process. Both reactions occur simultaneously and in competition at the same active site. This is Ribulose bisphosphate carboxylase large chain from Picea sitchensis (Sitka spruce).